Reading from the N-terminus, the 409-residue chain is uncharacterized protein (409 aa).

Positions 305-409 (LTKIDEKVVK…LIGEDDELEM (105 aa)) constitute an HTH arsR-type domain.

This is an uncharacterized protein from Methanocaldococcus jannaschii (strain ATCC 43067 / DSM 2661 / JAL-1 / JCM 10045 / NBRC 100440) (Methanococcus jannaschii).